A 151-amino-acid polypeptide reads, in one-letter code: MDRKKIAVTAGTFDLLHPGHFNTLNFAKKHADELIVIIARDETVKKIKGRRPVIPEEQRKIMIEALKPVDRAVLGSLNDKLEPIININPDIIIIGPDQTTYQINELKRQLLNHGLKPEIIKVEEYVNCQFHSSYDILKEIVRRWCNKELKV.

ATP-binding positions include 12–13, 17–20, aspartate 97, and tyrosine 125; these read TF and HPGH.

Belongs to the archaeal FAD synthase family. Homodimer. It depends on a divalent metal cation as a cofactor.

The enzyme catalyses FMN + ATP + H(+) = FAD + diphosphate. The protein operates within cofactor biosynthesis; FAD biosynthesis; FAD from FMN: step 1/1. Catalyzes the transfer of the AMP portion of ATP to flavin mononucleotide (FMN) to produce flavin adenine dinucleotide (FAD) coenzyme. This is FAD synthase from Methanococcus vannielii (strain ATCC 35089 / DSM 1224 / JCM 13029 / OCM 148 / SB).